The following is a 210-amino-acid chain: Kalata-B2 (210 aa).

Residues 1-22 (MAKFTNCLVLSLLLAAFVGAFG) form the signal peptide. Residues 23 to 66 (AEFSEADKATLVNDIAENIQKEILGEVKTSETVLTMFLKEMQLK) constitute a propeptide that is removed on maturation. The segment at residues 67-95 (GLPVCGETCFGGTCNTPGCSCTWPICTRD) is a cross-link (cyclopeptide (Gly-Asp)). 3 disulfides stabilise this stretch: Cys71–Cys85, Cys75–Cys87, and Cys80–Cys92. Positions 96 to 120 (SLPMRAGGKTSETTLHMFLKEMQLK) are excised as a propeptide. The cyclopeptide (Gly-Asp) cross-link spans 121 to 149 (GLPVCGETCFGGTCNTPGCSCTWPICTRD). Disulfide bonds link Cys125–Cys139, Cys129–Cys141, and Cys134–Cys146. Positions 150–174 (SLPMSAGGKTSETTLHMFLKEMQLK) are excised as a propeptide. Positions 175–203 (GLPVCGETCFGGTCNTPGCSCTWPICTRD) form a cross-link, cyclopeptide (Gly-Asp). 3 disulfide bridges follow: Cys179-Cys193, Cys183-Cys195, and Cys188-Cys200. Positions 204–210 (SLPLVAA) are excised as a propeptide.

It belongs to the cyclotide family. Moebius subfamily. Kalata-B2 is a cyclic peptide which occurs in three forms: with unmodified Trp, with Trp oxidized to form N-formylkynurenine and with Trp oxidized to form kynurenine. Oxidation is enhanced by exposure to sunlight.

Functionally, probably participates in a plant defense mechanism. Inhibitory effect on the growth and development of larvae from Helicoverpa punctigera. Has hemolytic activity. The polypeptide is Kalata-B2 (OAK4) (Oldenlandia affinis).